The primary structure comprises 241 residues: Platelet-derived growth factor subunit B (241 aa).

The signal sequence occupies residues 1-20 (MNRCWALFLPLCCYLRLVSA). A propeptide spans 21–81 (EGDPIPEELY…ELESSSRGRR (61 aa)) (removed in mature form). Asn63 carries an N-linked (GlcNAc...) asparagine glycan. Cystine bridges form between Cys97/Cys141, Cys130/Cys178, and Cys134/Cys180. The propeptide at 191–241 (RSPGTSREQRAKTPQARVTIRTVRIRRPPKGKHRKFKHTHDKAALKETLGA) is removed in mature form. A compositionally biased stretch (basic residues) spans 217 to 230 (RPPKGKHRKFKHTH). A disordered region spans residues 217–241 (RPPKGKHRKFKHTHDKAALKETLGA).

The protein belongs to the PDGF/VEGF growth factor family. In terms of assembly, antiparallel homodimer; disulfide-linked. Antiparallel heterodimer with PDGFA; disulfide-linked. The PDGFB homodimer interacts with PDGFRA and PDGFRB homodimers, and with heterodimers formed by PDGFRA and PDGFRB. The heterodimer composed of PDGFA and PDGFB interacts with PDGFRB homodimers, and with heterodimers formed by PDGFRA and PDGFRB. Interacts with XLKD1. Interacts with LRP1. Interacts with SORL1 (via the N-terminal ectodomain). Interacts with CD82; this interaction inhibits PDGFB-mediated signaling pathway. In terms of tissue distribution, localized to vascular smooth muscle cells. Also weakly expressed by cortical interstitial cells but absent in tubules. Up-regulated in areas of renal fibrosis. In mice with unilateral ureteral obstruction, an increased expression in interstitial cells and in some tubules observed after day 4.

The protein localises to the secreted. In terms of biological role, growth factor that plays an essential role in the regulation of embryonic development, cell proliferation, cell migration, survival and chemotaxis. Potent mitogen for cells of mesenchymal origin. Required for normal proliferation and recruitment of pericytes and vascular smooth muscle cells in the central nervous system, skin, lung, heart and placenta. Required for normal blood vessel development, and for normal development of kidney glomeruli. Plays an important role in wound healing. Signaling is modulated by the formation of heterodimers with PDGFA. The protein is Platelet-derived growth factor subunit B (Pdgfb) of Mus musculus (Mouse).